Consider the following 204-residue polypeptide: MSSKNNPESETKAKNKWEKVMEAEEEQEEGRGDGSQEMEPHREGLEFPSREKLEGQLTRMERKVDEYKTQYLRAQAEMDNLRKRIEREKADIIKFGSKQLITDLLPVADSLIHGLESPASEDPQVKSMRDGMSLTLDLLHNTLAKHGVQVINPNPGDPFDPALHEAMSVQAVPDAKPDTIIQVLQKGYQLNGRVLRAARVIVAG.

Residues 1–55 form a disordered region; the sequence is MSSKNNPESETKAKNKWEKVMEAEEEQEEGRGDGSQEMEPHREGLEFPSREKLEG. 2 stretches are compositionally biased toward basic and acidic residues: residues 7–22 and 29–55; these read PESE…KVME and EGRG…KLEG.

It belongs to the GrpE family. In terms of assembly, homodimer.

It localises to the cytoplasm. Functionally, participates actively in the response to hyperosmotic and heat shock by preventing the aggregation of stress-denatured proteins, in association with DnaK and GrpE. It is the nucleotide exchange factor for DnaK and may function as a thermosensor. Unfolded proteins bind initially to DnaJ; upon interaction with the DnaJ-bound protein, DnaK hydrolyzes its bound ATP, resulting in the formation of a stable complex. GrpE releases ADP from DnaK; ATP binding to DnaK triggers the release of the substrate protein, thus completing the reaction cycle. Several rounds of ATP-dependent interactions between DnaJ, DnaK and GrpE are required for fully efficient folding. This is Protein GrpE from Coxiella burnetii (strain RSA 331 / Henzerling II).